The following is a 232-amino-acid chain: Probable thiopurine S-methyltransferase (232 aa).

S-adenosyl-L-methionine is bound by residues 14–25, Leu54, Glu75, and Arg137; that span reads WENRWQEGRTGF. A substrate-binding site is contributed by Phe25.

The protein belongs to the class I-like SAM-binding methyltransferase superfamily. TPMT family.

The protein resides in the cytoplasm. It carries out the reaction S-adenosyl-L-methionine + a thiopurine = S-adenosyl-L-homocysteine + a thiopurine S-methylether.. The chain is Probable thiopurine S-methyltransferase (tpmt) from Danio rerio (Zebrafish).